The primary structure comprises 396 residues: Gap junction gamma-1 protein (396 aa).

Residues 1–22 (MSWSFLTRLLEEIHNHSTFVGK) are Cytoplasmic-facing. A helical transmembrane segment spans residues 23–45 (IWLTVLIVFRIVLTAVGGESIYY). The Extracellular segment spans residues 46–75 (DEQSKFVCNTEQPGCENVCYDAFAPLSHVR). Residues 76–95 (FWVFQIILVATPSVMYLGYA) form a helical membrane-spanning segment. Residues 96–175 (IHKIAKMEHG…RRIREDGLMK (80 aa)) lie on the Cytoplasmic side of the membrane. The tract at residues 145–165 (ELESDKENKEQSQPKPKHDGR) is disordered. A compositionally biased stretch (basic and acidic residues) spans 147–156 (ESDKENKEQS). The chain crosses the membrane as a helical span at residues 176-198 (IYVLQLLARTVFEVGFLIGQYFL). Residues 199-228 (YGFQVHPFYVCSRLPCPHKIDCFISRPTEK) lie on the Extracellular side of the membrane. Residues 229–248 (TIFLLIMYGVTGLCLLLNIW) traverse the membrane as a helical segment. Topologically, residues 249–396 (EMLHLGFGTI…SGDGKTSVWI (148 aa)) are cytoplasmic. The tract at residues 353-396 (VQAYSHQNNPHGPREKKAKVGSKAGSNKSTASSKSGDGKTSVWI) is disordered. The segment covering 376–387 (AGSNKSTASSKS) has biased composition (polar residues).

Belongs to the connexin family. Gamma-type subfamily. A connexon is composed of a hexamer of connexins. Interacts with CNST.

It is found in the cell membrane. It localises to the cell junction. The protein resides in the gap junction. Functionally, one gap junction consists of a cluster of closely packed pairs of transmembrane channels, the connexons, through which materials of low MW diffuse from one cell to a neighboring cell. This is Gap junction gamma-1 protein (GJC1) from Homo sapiens (Human).